A 205-amino-acid chain; its full sequence is Cytochrome c oxidase subunit 3 (205 aa).

5 consecutive transmembrane segments (helical) span residues 29–49 (TIVFLSQELMFFAGLFAMYFV), 72–92 (ALLITVILVSSSVTCQFGVFA), 104–124 (WFLVTIILGSIFVIGQGYEYI), 142–162 (FFITTGFHALHVIAGVMAFVV), and 184–204 (SYYWHFVDVVWIGLFITIYFI).

In terms of assembly, associates with subunits I, II and IV to form cytochrome c oxidase. The 4 subunit cytochrome c oxidase forms a supercomplex with the menaquinol-cytochrome c reductase complex (cytochrome bc1).

It localises to the cell membrane. The enzyme catalyses 4 Fe(II)-[cytochrome c] + O2 + 8 H(+)(in) = 4 Fe(III)-[cytochrome c] + 2 H2O + 4 H(+)(out). This Corynebacterium glutamicum (strain ATCC 13032 / DSM 20300 / JCM 1318 / BCRC 11384 / CCUG 27702 / LMG 3730 / NBRC 12168 / NCIMB 10025 / NRRL B-2784 / 534) protein is Cytochrome c oxidase subunit 3 (ctaE).